A 612-amino-acid chain; its full sequence is T-cell immunomodulatory protein (612 aa).

The first 33 residues, 1-33 (MAAAGRLPSSWALFSPLLAGLALLGVGPVPARA), serve as a signal peptide directing secretion. Residues asparagine 36, asparagine 95, asparagine 139, asparagine 146, asparagine 151, asparagine 176, asparagine 188, asparagine 226, and asparagine 243 are each glycosylated (N-linked (GlcNAc...) asparagine). The FG-GAP; atypical repeat unit spans residues 258–293 (VVGQSAFADFDGDGHMDHLLPGCEDKNCQKSTIYLV). Residues asparagine 353, asparagine 371, and asparagine 482 are each glycosylated (N-linked (GlcNAc...) asparagine). Residues 567 to 587 (VLLTAIALIGVCVFILAIIGI) traverse the membrane as a helical segment.

This sequence belongs to the TIP family. Interacts with RUVBL1, RUVBL2 and alpha-tubulin. In terms of tissue distribution, ubiquitously expressed.

The protein resides in the secreted. The protein localises to the membrane. In terms of biological role, modulator of T-cell function. Has a protective effect in graft versus host disease model. The protein is T-cell immunomodulatory protein of Homo sapiens (Human).